Consider the following 420-residue polypeptide: Glutamate dehydrogenase (420 aa).

Lys-105 is a catalytic residue. Residue 220–226 coordinates NAD(+); that stretch reads GYGNAGY.

The protein belongs to the Glu/Leu/Phe/Val dehydrogenases family. As to quaternary structure, homohexamer.

The protein localises to the cytoplasm. It carries out the reaction L-glutamate + NAD(+) + H2O = 2-oxoglutarate + NH4(+) + NADH + H(+). The enzyme catalyses L-glutamate + NADP(+) + H2O = 2-oxoglutarate + NH4(+) + NADPH + H(+). In Pyrococcus horikoshii (strain ATCC 700860 / DSM 12428 / JCM 9974 / NBRC 100139 / OT-3), this protein is Glutamate dehydrogenase (gdhA).